The chain runs to 113 residues: Ribonuclease P protein component (113 aa).

The segment covering 1 to 10 has biased composition (basic residues); the sequence is MLPTRHRMRT. Positions 1–23 are disordered; that stretch reads MLPTRHRMRTSAHFSTTVRSGAR.

Belongs to the RnpA family. As to quaternary structure, consists of a catalytic RNA component (M1 or rnpB) and a protein subunit.

The catalysed reaction is Endonucleolytic cleavage of RNA, removing 5'-extranucleotides from tRNA precursor.. In terms of biological role, RNaseP catalyzes the removal of the 5'-leader sequence from pre-tRNA to produce the mature 5'-terminus. It can also cleave other RNA substrates such as 4.5S RNA. The protein component plays an auxiliary but essential role in vivo by binding to the 5'-leader sequence and broadening the substrate specificity of the ribozyme. This is Ribonuclease P protein component from Kocuria rhizophila (strain ATCC 9341 / DSM 348 / NBRC 103217 / DC2201).